A 438-amino-acid polypeptide reads, in one-letter code: Na(+)/H(+) antiporter NhaA 2 (438 aa).

A run of 11 helical transmembrane segments spans residues 21–41, 66–86, 102–122, 130–150, 160–180, 183–203, 206–226, 308–328, 341–361, 376–396, and 410–430; these read SGGIVLLGATVLALVLANSPW, LHHWINDGLMAVFFFLVGLEL, MLPIAAAFGGMLVPALIFHFI, KGWGIPMATDIAFALGVLALL, IFLTALAIVDDLGAVLVIALF, GELAVGKLLVALVLLLILIAG, LGVQSLNFYGLLGFCLWVVLL, WVIFGVIPIFALANAGLVLQL, LGVALGLLLGKPLGILFFSWI, WMDVFGVGILGGIGFTMSLFI, and AKLGIFIASMLAGAAGFTVLS.

This sequence belongs to the NhaA Na(+)/H(+) (TC 2.A.33) antiporter family.

Its subcellular location is the cell inner membrane. The catalysed reaction is Na(+)(in) + 2 H(+)(out) = Na(+)(out) + 2 H(+)(in). In terms of biological role, na(+)/H(+) antiporter that extrudes sodium in exchange for external protons. The protein is Na(+)/H(+) antiporter NhaA 2 of Syntrophotalea carbinolica (strain DSM 2380 / NBRC 103641 / GraBd1) (Pelobacter carbinolicus).